Consider the following 98-residue polypeptide: Small ribosomal subunit protein eS24 (98 aa).

This sequence belongs to the eukaryotic ribosomal protein eS24 family.

This chain is Small ribosomal subunit protein eS24, found in Thermococcus sibiricus (strain DSM 12597 / MM 739).